Here is an 89-residue protein sequence, read N- to C-terminus: Small ribosomal subunit protein uS15 (89 aa).

It belongs to the universal ribosomal protein uS15 family. In terms of assembly, part of the 30S ribosomal subunit. Forms a bridge to the 50S subunit in the 70S ribosome, contacting the 23S rRNA.

Functionally, one of the primary rRNA binding proteins, it binds directly to 16S rRNA where it helps nucleate assembly of the platform of the 30S subunit by binding and bridging several RNA helices of the 16S rRNA. Its function is as follows. Forms an intersubunit bridge (bridge B4) with the 23S rRNA of the 50S subunit in the ribosome. The chain is Small ribosomal subunit protein uS15 from Bordetella parapertussis (strain 12822 / ATCC BAA-587 / NCTC 13253).